Consider the following 449-residue polypeptide: Trigger factor (449 aa).

Residues 173 to 258 form the PPIase FKBP-type domain; that stretch reads GDRVTVDFVG…LKKVEWPHLP (86 aa).

The protein belongs to the FKBP-type PPIase family. Tig subfamily.

It is found in the cytoplasm. It catalyses the reaction [protein]-peptidylproline (omega=180) = [protein]-peptidylproline (omega=0). Involved in protein export. Acts as a chaperone by maintaining the newly synthesized protein in an open conformation. Functions as a peptidyl-prolyl cis-trans isomerase. This chain is Trigger factor, found in Burkholderia mallei (strain NCTC 10229).